Consider the following 567-residue polypeptide: uncharacterized protein (567 aa).

Transmembrane regions (helical) follow at residues 136–156, 159–179, 193–213, 217–237, 258–278, 291–311, 334–354, 364–384, 393–415, 426–446, 457–477, and 536–553; these read LFCLGCLWCYFSSGMVSLIFA, FMGIGGGGLITLSTIINSDII, LLLGFGAICGASFGGVLSEVF, LCFLVQVPFSVLSIAVGFFFV, ILGGLLLVSGLTSLLLVLTFG, LLLLLGILCIVAFVYVESITE, FLIGLAGYAYLFTLPLFFQLV, LRLALPSLSTPIGGLICGILM, LLFSGVFLMSLGYFLSLFIHPGI, PANVGQGIGFPSSLFSFIFAF, TLYLIRSIGSLFGVGGLSAVI, and AQQFTTICCVLALGLCIL.

It belongs to the major facilitator superfamily.

It localises to the membrane. This is an uncharacterized protein from Schizosaccharomyces pombe (strain 972 / ATCC 24843) (Fission yeast).